The following is an 82-amino-acid chain: uncharacterized protein (82 aa).

Helical transmembrane passes span 1–21, 22–42, and 62–82; these read MSAS…SVST, VLLG…LAAF, and WRLL…LTLL.

It localises to the cell membrane. This is an uncharacterized protein from Stutzerimonas stutzeri (Pseudomonas stutzeri).